We begin with the raw amino-acid sequence, 751 residues long: Collagen alpha-1(XIII) chain (751 aa).

The interval 1–24 is disordered; the sequence is MVAERTRKAAASGSRGPGELGAPG. Residues 1-40 lie on the Cytoplasmic side of the membrane; the sequence is MVAERTRKAAASGSRGPGELGAPGPGTVALAEQCARLPSP. The nonhelical region 1 (NC1) stretch occupies residues 1 to 119; it reads MVAERTRKAA…KMSPGCNCPP (119 aa). Gly residues predominate over residues 15-24; the sequence is RGPGELGAPG. Residues 41–59 form a helical; Signal-anchor for type II membrane protein membrane-spanning segment; sequence GCCGLLALALCSLALSLLA. At 60–751 the chain is on the extracellular side; the sequence is HFRTAELQAR…GLPVQGCWNK (692 aa). Disordered regions lie at residues 108–127, 190–225, and 265–449; these read APKMSPGCNCPPGPPGPTGR, PGHPGPKGEMGLVGPRGQPGPQGQKGEKGQCGEYPH, and TFQG…EMVD. Residues 116–125 are compositionally biased toward pro residues; sequence NCPPGPPGPT. Residues 120 to 223 are triple-helical region 1 (COL1); the sequence is GPPGPTGRPG…KGEKGQCGEY (104 aa). The segment covering 204 to 213 has biased composition (low complexity); the sequence is PRGQPGPQGQ. Positions 214–225 are enriched in basic and acidic residues; the sequence is KGEKGQCGEYPH. The tract at residues 224–273 is nonhelical region 2 (NC2); it reads PHREYPGGMLAALRSNPIMSLKLLPLLNSVRLAPPPVIKRRTFQGEQSQT. The tract at residues 274 to 445 is triple-helical region 2 (COL2); sequence GIQGPPGPPG…KGAKGEPGKG (172 aa). 3 stretches are compositionally biased toward pro residues: residues 278–288, 296–312, and 391–402; these read PPGPPGPPGPS, LPGPIGPPGLPGPPGPK, and PGPPGLPGPPGP. Residues 403–436 show a composition bias toward low complexity; that stretch reads KGEAGVDGQAGPPGQQGDKGQPGAAGEQGPSGPK. Over residues 438–447 the composition is skewed to basic and acidic residues; sequence AKGEPGKGEM. The segment at 446–467 is nonhelical region 3 (NC3); that stretch reads EMVDYNGSINEALQEIRTLALM. A glycan (N-linked (GlcNAc...) asparagine) is linked at Asn451. A disordered region spans residues 466-751; it reads LMGPPGLPGQ…GLPVQGCWNK (286 aa). The triple-helical region 3 (COL3) stretch occupies residues 468–733; it reads GPPGLPGQTG…KGDQGAPGLD (266 aa). Residues 470–484 show a composition bias toward pro residues; the sequence is PGLPGQTGPPGPPGT. Composition is skewed to basic and acidic residues over residues 499–509, 557–568, and 586–596; these read HDGDKGPRGKP, TGEKGEPGDEGR, and EKGEAGEKGDP. The span at 601-613 shows a compositional bias: pro residues; sequence PGPPGPEGPPGPP. The span at 615-628 shows a compositional bias: low complexity; that stretch reads LQGFPGPKGEAGLE. Basic and acidic residues predominate over residues 630 to 643; the sequence is SKGEKGSQGEKGDR. Over residues 658–673 the composition is skewed to pro residues; the sequence is PGPPGTPGPIGVPGPA. Residues 684–699 are compositionally biased toward low complexity; the sequence is DPGMTGPTGAAGLPGL. The segment covering 706 to 726 has biased composition (basic and acidic residues); that stretch reads KGNRGERGKKGSRGPKGDKGD. Residues 734-751 are nonhelical region 4 (NC4); the sequence is APCPLGEDGLPVQGCWNK.

As to quaternary structure, homotrimer; disulfide-linked. Nucleation of the type XIII collagen triple helix is likely to occur at the N-terminal region with triple helix formation proceeding from the N- to the C-terminus. Interacts with FN1, perlecan/HSPG2 and NID2.

It is found in the cell membrane. The protein resides in the postsynaptic cell membrane. In terms of biological role, involved in cell-matrix and cell-cell adhesion interactions that are required for normal development. May participate in the linkage between muscle fiber and basement membrane. May play a role in endochondral ossification of bone and branching morphogenesis of lung. Binds heparin. At neuromuscular junctions, may play a role in acetylcholine receptor clustering. In Mus musculus (Mouse), this protein is Collagen alpha-1(XIII) chain.